The chain runs to 452 residues: UPF0210 protein CHY_1509 (452 aa).

This sequence belongs to the UPF0210 family. In terms of assembly, homodimer.

This chain is UPF0210 protein CHY_1509, found in Carboxydothermus hydrogenoformans (strain ATCC BAA-161 / DSM 6008 / Z-2901).